We begin with the raw amino-acid sequence, 298 residues long: Inosose dehydratase (298 aa).

The protein belongs to the IolE/MocC family. Glutathione serves as cofactor. Co(2+) is required as a cofactor. It depends on Mn(2+) as a cofactor.

The enzyme catalyses scyllo-inosose = 3D-3,5/4-trihydroxycyclohexane-1,2-dione + H2O. In terms of biological role, catalyzes the dehydration of inosose (2-keto-myo-inositol, 2KMI or 2,4,6/3,5-pentahydroxycyclohexanone) to 3D-(3,5/4)-trihydroxycyclohexane-1,2-dione (D-2,3-diketo-4-deoxy-epi-inositol). This chain is Inosose dehydratase, found in Erwinia tasmaniensis (strain DSM 17950 / CFBP 7177 / CIP 109463 / NCPPB 4357 / Et1/99).